Here is a 780-residue protein sequence, read N- to C-terminus: Cation channel sperm-associated protein 1 (780 aa).

3 disordered regions span residues 1 to 37 (MDQNSVPEKAQNEADTNNADRFFRSHSSPPHHRPGHS), 71 to 306 (LSSH…QDHH), and 376 to 412 (QMSKKVHTQDISTKHSEDWGKEEGQFQKRKTGRLQRT). Over 1–447 (MDQNSVPEKA…EMIRNLTQSL (447 aa)) the chain is Cytoplasmic. Positions 110–122 (SYGEDYHDELQRD) are enriched in basic and acidic residues. Positions 211–241 (QVPHRGWPHHHQVHHHGRSRHHEAHQHGKSP) are enriched in basic residues. The span at 261-284 (SDYHSEYHQGDHHPSEYHHGDHPH) shows a compositional bias: basic and acidic residues. A compositionally biased stretch (basic residues) spans 285–299 (HTQHHYHQTHRHRDY). Basic and acidic residues predominate over residues 387–401 (STKHSEDWGKEEGQF). The segment covering 402–412 (QKRKTGRLQRT) has biased composition (basic residues). A helical transmembrane segment spans residues 448 to 469 (AFETFIFFVVCLNTVMLVAQTF). Over 470–478 (AEVEIRGEW) the chain is Extracellular. Residues 479-500 (YFMALDSIFFCIYVVEALLKII) traverse the membrane as a helical segment. Residues 501–508 (ALGLSYFF) are Cytoplasmic-facing. Residues 509–531 (DFWNNLDFFIMAMAVLDFLLMQT) form a helical membrane-spanning segment. At 532-540 (HSFAIYHQS) the chain is on the extracellular side. The chain crosses the membrane as a helical span at residues 541–563 (LFRILKVFKSLRALRAIRVLRRL). Residues 564–581 (SFLTSVQEVTGTLGQSLP) lie on the Cytoplasmic side of the membrane. Residues 582 to 604 (SIAAILILMFTCLFLFSAVLRAL) traverse the membrane as a helical segment. Over 605–615 (FRKSDPKRFQN) the chain is Extracellular. An intramembrane region (helical; Pore-forming) is located at residues 616 to 628 (IFTTIFTLFTLLT). At 629 to 645 (LDDWSLIYMDSRAQGAW) the chain is on the extracellular side. A helical transmembrane segment spans residues 646-671 (YIIPILVIYIIIQYFIFLNLVITVLV). At 672–780 (DSFQTALFKG…FEAGEEDFRN (109 aa)) the chain is on the cytoplasmic side.

Belongs to the cation channel sperm-associated (TC 1.A.1.19) family. Component of the CatSper complex or CatSpermasome composed of the core pore-forming members CATSPER1, CATSPER2, CATSPER3 and CATSPER4 as well as auxiliary members CATSPERB, CATSPERG, CATSPERD, CATSPERE, CATSPERZ, C2CD6/CATSPERT, TMEM249, TMEM262 and EFCAB9. HSPA1 may be an additional auxiliary complex member. The core complex members CATSPER1, CATSPER2, CATSPER3 and CATSPER4 form a heterotetrameric channel. The auxiliary CATSPERB, CATSPERG, CATSPERD and CATSPERE subunits form a pavilion-like structure over the pore which stabilizes the complex through interactions with CATSPER4, CATSPER3, CATSPER1 and CATSPER2 respectively. TMEM262/CATSPERH interacts with CATSPERB, further stabilizing the complex. C2CD6/CATSPERT interacts at least with CATSPERD and is required for targeting the CatSper complex in the flagellar membrane. Interacts with Ca(v)3.3/CACNA1I, leading to suppression of T-type calcium channel activity. In terms of tissue distribution, testis-specific.

The protein localises to the cell projection. It is found in the cilium. Its subcellular location is the flagellum membrane. The catalysed reaction is Ca(2+)(in) = Ca(2+)(out). The CatSper calcium channel is indirectly activated by extracellular progesterone and prostaglandins following the sequence: progesterone &gt; PGF1-alpha = PGE1 &gt; PGA1 &gt; PGE2 &gt;&gt; PGD2. The CatSper calcium channel is directly inhibited by endocannabinoid 2-arachidonoylglycerol (2AG). Indirect activation by progesterone takes place via the following mechanism: progesterone binds and activates the acylglycerol lipase ABHD2, which in turn mediates hydrolysis of 2AG inhibitor, relieving inhibition of the CatSper channel. The primary effect of progesterone activation is to shift voltage dependence towards more physiological, negative membrane potentials; it is not mediated by metabotropic receptors and second messengers. Sperm capacitation enhances the effect of progesterone by providing additional negative shift. Also activated by the elevation of intracellular pH. Pore-forming subunit of the CatSper complex, a sperm-specific voltage-gated calcium channel that plays a central role in calcium-dependent physiological responses essential for successful fertilization, such as sperm hyperactivation, acrosome reaction and chemotaxis towards the oocyte. The chain is Cation channel sperm-associated protein 1 (CATSPER1) from Homo sapiens (Human).